The chain runs to 563 residues: Tripeptidyl-peptidase 1 (563 aa).

Positions 1-19 (MGLQACLLGLFALILSGKC) are cleaved as a signal peptide. Positions 20 to 195 (SYSPEPDQRR…PEPQVTGTVG (176 aa)) are cleaved as a propeptide — removed in mature form. Cysteine 111 and cysteine 122 are oxidised to a cystine. A Peptidase S53 domain is found at 199 to 563 (GVTPSVIRKR…PALLKTLLNP (365 aa)). Asparagine 210 and asparagine 222 each carry an N-linked (GlcNAc...) asparagine glycan. Residues glutamate 272 and aspartate 276 each act as charge relay system in the active site. N-linked (GlcNAc...) asparagine glycans are attached at residues asparagine 286, asparagine 313, and asparagine 443. 2 disulfide bridges follow: cysteine 365–cysteine 526 and cysteine 522–cysteine 537. The active-site Charge relay system is the serine 475. Ca(2+) contacts are provided by aspartate 517 and valine 518. The Ca(2+) site is built by glycine 539, glycine 541, and aspartate 543.

As to quaternary structure, monomer. Interacts with CLN5. Interacts with CLN3. Ca(2+) serves as cofactor. Post-translationally, activated by autocatalytic proteolytical processing upon acidification. N-glycosylation is required for processing and activity. In terms of tissue distribution, detected in all tissues examined with highest levels in heart and placenta and relatively similar levels in other tissues.

The protein localises to the lysosome. Its subcellular location is the melanosome. The enzyme catalyses Release of an N-terminal tripeptide from a polypeptide, but also has endopeptidase activity.. Inhibited by diisopropyl fluorophosphate (DFP). In terms of biological role, lysosomal serine protease with tripeptidyl-peptidase I activity. May act as a non-specific lysosomal peptidase which generates tripeptides from the breakdown products produced by lysosomal proteinases. Requires substrates with an unsubstituted N-terminus. The sequence is that of Tripeptidyl-peptidase 1 (TPP1) from Homo sapiens (Human).